A 716-amino-acid polypeptide reads, in one-letter code: MKPHNSEKYFVKNGQPHFLISGEVHYFRINPKLWRNHLQLLKQTGADTVSTYIPWDWHEIEEDDFDFEGKTHPARNLIRFIKLCKEENLDLIVKPGPYILAEYENQGLPSWLLKKLSKNAFALDENGNVISPDLVSYLSDEFLEYTFKWYDKVMPIISKHQKEHYGPITMMQLCNEIGVFQWLSGKSDYNPKVINLYKEFIIQRYKTIEKLNSVYSTNYNSFDDLKAPSGKIKLRSDYCAYFDFHLFFREYYNKYISILKNKIRSFGINIKLTHNIPGWIYGNASELPMLISTYSEIMKNHPDIIFGLDHIPEFVSFRNAHSDLACNKILEAMQPEAPVWAAEFQAGTREHHVKAYAKDLETFYIASLAHGIKGFNYYMFSQGINPEGKGFYGKTFYFQTALDAASNKLALYDSIKKVNRFIRKEQKDLLRTNVNSEICVGFYKPYFFTELISSQLLKEKKLNVEELGLYIDPRFLREEILFNGLLRGLQTLNYNYDVVDLENCDLKSLTAYKQLWITSAEFMDAETQNLLSEFVLNGGNLILYPAVPTLDNYLNRCEILKNNFGIEFITKDSSHKVSAFGIEDVFTAFSKKQIYNDTNSKPIAFTQENEICGIRKKIGKGELTILGFAFGYTSDEHLELIDKLVKLNKIKRELFVSDKDIQFVVRENNKSRYIFFLNYHNERKTFNYRKSSELKKKKSEEISIAPFSYKVIKENK.

Residues Tyr52, Ile99, Ala101, Glu102, Asn175, Glu176, Gly278, Trp279, Glu343, and Arg349 each contribute to the sophorose site. Residue Glu176 is the Proton donor/acceptor of the active site. Residues Glu176, Gly278, and Trp279 each contribute to the beta-D-glucose site. Glu343 (nucleophile) is an active-site residue. Beta-D-glucose contacts are provided by Arg349, Lys358, and Glu361. Tyr378 serves as a coordination point for sophorose. Residues Ser708 and Tyr709 each contribute to the beta-D-glucose site.

This sequence belongs to the glycosyl hydrolase 35 family. Homidimer.

Its subcellular location is the cytoplasm. The enzyme catalyses a D-glucoside + [(1-&gt;2)-beta-D-glucosyl](n) = a beta-D-glucosyl-(1-&gt;2)-D-glucoside + [(1-&gt;2)-beta-D-glucosyl](n-1). Its function is as follows. Glycosyltransferase acting on beta-1,2-glucooligosaccharides. Catalyzes the transfer of a glucosyl residue from the non-reducing end of a 1,2-beta-D-glucan to a glucose residue of an acceptor molecule, forming a beta-1,2-glucosidic bond. The beta-1,2-linked glucose dimer sophorose is the preferred donor in vitro. Has a very broad specificity for the acceptor and can act on various aryl- and alkyl-glucosides. Does not show any hydrolytic activity. The sequence is that of Beta-1,2-glucosyltransferase from Ignavibacterium album (strain DSM 19864 / JCM 16511 / NBRC 101810 / Mat9-16).